The sequence spans 479 residues: D-hydantoinase/dihydropyrimidinase (479 aa).

Zn(2+)-binding residues include histidine 59, histidine 61, and lysine 150. N6-carboxylysine is present on lysine 150. Tyrosine 155 is a binding site for substrate. 2 residues coordinate Zn(2+): histidine 183 and histidine 239. Serine 289 contributes to the substrate binding site. Residue aspartate 316 participates in Zn(2+) binding. A substrate-binding site is contributed by asparagine 337.

Belongs to the metallo-dependent hydrolases superfamily. Hydantoinase/dihydropyrimidinase family. In terms of assembly, homotetramer. Zn(2+) is required as a cofactor. Post-translationally, carboxylation allows a single lysine to coordinate two zinc ions.

The catalysed reaction is 5,6-dihydrouracil + H2O = 3-(carbamoylamino)propanoate + H(+). Functionally, catalyzes the hydrolysis of dihydropyrimidines and of the structurally related DL-5-mono-substituted hydantoins, to produce N-carbamoyl-D-amino acids. This Pseudomonas aeruginosa (strain ATCC 15692 / DSM 22644 / CIP 104116 / JCM 14847 / LMG 12228 / 1C / PRS 101 / PAO1) protein is D-hydantoinase/dihydropyrimidinase (dht).